The sequence spans 399 residues: Elongation factor Tu (399 aa).

The 195-residue stretch at 10–204 (KPHVNIGTIG…AVDASIPEPE (195 aa)) folds into the tr-type G domain. Positions 19 to 26 (GHVDHGKT) are G1. 19–26 (GHVDHGKT) serves as a coordination point for GTP. Mg(2+) is bound at residue Thr-26. The tract at residues 60–64 (GITIN) is G2. Positions 81 to 84 (DCPG) are G3. GTP is bound by residues 81-85 (DCPGH) and 136-139 (NKCD). Residues 136 to 139 (NKCD) are G4. Positions 174-176 (SGL) are G5.

This sequence belongs to the TRAFAC class translation factor GTPase superfamily. Classic translation factor GTPase family. EF-Tu/EF-1A subfamily. In terms of assembly, monomer.

It localises to the cytoplasm. It carries out the reaction GTP + H2O = GDP + phosphate + H(+). Its function is as follows. GTP hydrolase that promotes the GTP-dependent binding of aminoacyl-tRNA to the A-site of ribosomes during protein biosynthesis. This chain is Elongation factor Tu, found in Prochlorococcus marinus (strain MIT 9312).